We begin with the raw amino-acid sequence, 501 residues long: MTAAMYDLMDYDEVLEKFDPVMGLEVHVELATETKMFSAPSAHFGAEPNSNVDPVSLGLPGALPVVNAKGVEWAIKIGLALNCKIAESSRFARKNYFYPDQPKNYQISQYDEPIAYDGYLDVVLDDGTPWRVEIERAHMEEDTGKLTHLGGADGRIHGATASLVDCNRAGIPLIEIVTKPIEGAGERAPEVARAYVGALRDLVKALGVSDARMDQGSMRCDANVSLRPVGTVEFGTRTETKNINSLKSVEQAVRYEMQRQAQVLEDGGEIVQETRHYQETDGSTSKGRPKETAEDYRYFNDPDLPPVIAPKEWVEEIRATLPELPWIRRARIQKEWGLKDEEMRDLVNAGALDLIVETVEAGASASEARSWWVAYLSQKANESGVELDSLSITPQQVARVAALVKEGKLTNKLARQAVDGVLAGEGDVDEVVAARGLEVVRDDGAIEKAVDEALAANPDIVEKYKAGNTKVTGAIVGAVMKATRGKADPAQVNKLIAEKLA.

A disordered region spans residues 271-299; it reads VQETRHYQETDGSTSKGRPKETAEDYRYF. Residues 288–299 are compositionally biased toward basic and acidic residues; sequence RPKETAEDYRYF.

This sequence belongs to the GatB/GatE family. GatB subfamily. Heterotrimer of A, B and C subunits.

The catalysed reaction is L-glutamyl-tRNA(Gln) + L-glutamine + ATP + H2O = L-glutaminyl-tRNA(Gln) + L-glutamate + ADP + phosphate + H(+). The enzyme catalyses L-aspartyl-tRNA(Asn) + L-glutamine + ATP + H2O = L-asparaginyl-tRNA(Asn) + L-glutamate + ADP + phosphate + 2 H(+). Functionally, allows the formation of correctly charged Asn-tRNA(Asn) or Gln-tRNA(Gln) through the transamidation of misacylated Asp-tRNA(Asn) or Glu-tRNA(Gln) in organisms which lack either or both of asparaginyl-tRNA or glutaminyl-tRNA synthetases. The reaction takes place in the presence of glutamine and ATP through an activated phospho-Asp-tRNA(Asn) or phospho-Glu-tRNA(Gln). In Corynebacterium diphtheriae (strain ATCC 700971 / NCTC 13129 / Biotype gravis), this protein is Aspartyl/glutamyl-tRNA(Asn/Gln) amidotransferase subunit B.